Consider the following 461-residue polypeptide: Cysteine--tRNA ligase (461 aa).

Zn(2+) is bound at residue Cys27. The 'HIGH' region signature appears at 29–39 (ITVYDYCHIGH). Zn(2+) is bound by residues Cys208, His233, and Glu237. Residues 265–269 (KMSKS) carry the 'KMSKS' region motif. Lys268 lines the ATP pocket.

The protein belongs to the class-I aminoacyl-tRNA synthetase family. In terms of assembly, monomer. It depends on Zn(2+) as a cofactor.

It is found in the cytoplasm. The enzyme catalyses tRNA(Cys) + L-cysteine + ATP = L-cysteinyl-tRNA(Cys) + AMP + diphosphate. The polypeptide is Cysteine--tRNA ligase (Chromohalobacter salexigens (strain ATCC BAA-138 / DSM 3043 / CIP 106854 / NCIMB 13768 / 1H11)).